The chain runs to 346 residues: Phenylalanine--tRNA ligase alpha subunit (346 aa).

Glu261 provides a ligand contact to Mg(2+).

Belongs to the class-II aminoacyl-tRNA synthetase family. Phe-tRNA synthetase alpha subunit type 1 subfamily. In terms of assembly, tetramer of two alpha and two beta subunits. Requires Mg(2+) as cofactor.

The protein localises to the cytoplasm. The catalysed reaction is tRNA(Phe) + L-phenylalanine + ATP = L-phenylalanyl-tRNA(Phe) + AMP + diphosphate + H(+). In Streptococcus agalactiae serotype III (strain NEM316), this protein is Phenylalanine--tRNA ligase alpha subunit.